The chain runs to 642 residues: Myrosinase-binding protein 2 (642 aa).

4 consecutive Jacalin-type lectin domains span residues 2 to 151 (SEKV…HFFA), 156 to 291 (LKHF…HFAP), 334 to 477 (PNKV…YFAP), and 490 to 633 (SKKL…HAVP). Residues 296-334 (TPAPAPAPAPAPAPAPSPAPASAPVPAPAPTPAPAPAPP) show a composition bias toward pro residues. 2 disordered regions span residues 296–338 (TPAP…NKVE) and 479–499 (TNST…RGGN). Residues 479-490 (TNSTTPSTPSTS) show a composition bias toward low complexity.

It belongs to the jacalin lectin family. In terms of tissue distribution, expressed in flowers. Detected mainly in ovules and styles of immature flowers, but also in pistils, styles, stamens, petals and embryos. Not detected in leaves.

The protein is Myrosinase-binding protein 2 (F-ATMBP) of Arabidopsis thaliana (Mouse-ear cress).